Reading from the N-terminus, the 346-residue chain is Phenylalanine--tRNA ligase alpha subunit (346 aa).

Glutamate 262 is a Mg(2+) binding site.

It belongs to the class-II aminoacyl-tRNA synthetase family. Phe-tRNA synthetase alpha subunit type 1 subfamily. In terms of assembly, tetramer of two alpha and two beta subunits. Requires Mg(2+) as cofactor.

It localises to the cytoplasm. It carries out the reaction tRNA(Phe) + L-phenylalanine + ATP = L-phenylalanyl-tRNA(Phe) + AMP + diphosphate + H(+). The protein is Phenylalanine--tRNA ligase alpha subunit of Ehrlichia chaffeensis (strain ATCC CRL-10679 / Arkansas).